The primary structure comprises 277 residues: 3-methyl-2-oxobutanoate hydroxymethyltransferase (277 aa).

2 residues coordinate Mg(2+): Asp-53 and Asp-96. Residues 53 to 54 (DS), Asp-96, and Lys-126 contribute to the 3-methyl-2-oxobutanoate site. Residue Glu-128 participates in Mg(2+) binding. The Proton acceptor role is filled by Glu-195.

It belongs to the PanB family. Homodecamer; pentamer of dimers. Requires Mg(2+) as cofactor.

It is found in the cytoplasm. It catalyses the reaction 3-methyl-2-oxobutanoate + (6R)-5,10-methylene-5,6,7,8-tetrahydrofolate + H2O = 2-dehydropantoate + (6S)-5,6,7,8-tetrahydrofolate. The protein operates within cofactor biosynthesis; (R)-pantothenate biosynthesis; (R)-pantoate from 3-methyl-2-oxobutanoate: step 1/2. Catalyzes the reversible reaction in which hydroxymethyl group from 5,10-methylenetetrahydrofolate is transferred onto alpha-ketoisovalerate to form ketopantoate. This is 3-methyl-2-oxobutanoate hydroxymethyltransferase from Chlorobaculum tepidum (strain ATCC 49652 / DSM 12025 / NBRC 103806 / TLS) (Chlorobium tepidum).